The following is a 53-amino-acid chain: UPF0391 membrane protein Bxeno_A1464 (53 aa).

A run of 2 helical transmembrane segments spans residues 5 to 25 and 30 to 50; these read AAIF…GIAA and IAKV…LMGV.

Belongs to the UPF0391 family.

The protein localises to the cell membrane. This is UPF0391 membrane protein Bxeno_A1464 from Paraburkholderia xenovorans (strain LB400).